The primary structure comprises 189 residues: Crossover junction endodeoxyribonuclease RuvC (189 aa).

Active-site residues include Asp-11, Glu-71, and Asp-143. Asp-11, Glu-71, and Asp-143 together coordinate Mg(2+).

The protein belongs to the RuvC family. As to quaternary structure, homodimer which binds Holliday junction (HJ) DNA. The HJ becomes 2-fold symmetrical on binding to RuvC with unstacked arms; it has a different conformation from HJ DNA in complex with RuvA. In the full resolvosome a probable DNA-RuvA(4)-RuvB(12)-RuvC(2) complex forms which resolves the HJ. The cofactor is Mg(2+).

The protein localises to the cytoplasm. It carries out the reaction Endonucleolytic cleavage at a junction such as a reciprocal single-stranded crossover between two homologous DNA duplexes (Holliday junction).. Functionally, the RuvA-RuvB-RuvC complex processes Holliday junction (HJ) DNA during genetic recombination and DNA repair. Endonuclease that resolves HJ intermediates. Cleaves cruciform DNA by making single-stranded nicks across the HJ at symmetrical positions within the homologous arms, yielding a 5'-phosphate and a 3'-hydroxyl group; requires a central core of homology in the junction. The consensus cleavage sequence is 5'-(A/T)TT(C/G)-3'. Cleavage occurs on the 3'-side of the TT dinucleotide at the point of strand exchange. HJ branch migration catalyzed by RuvA-RuvB allows RuvC to scan DNA until it finds its consensus sequence, where it cleaves and resolves the cruciform DNA. The protein is Crossover junction endodeoxyribonuclease RuvC of Methylorubrum extorquens (strain CM4 / NCIMB 13688) (Methylobacterium extorquens).